The chain runs to 466 residues: Benzoate transport protein (466 aa).

At 1-22 (MSREINVNQMIDDSKLTPFHWR) the chain is on the cytoplasmic side. Residues 23–43 (VIILSTLIIIFDGYDLVIYGV) traverse the membrane as a helical segment. Residues 44-60 (ALPLLMKEWAIDPVTAG) are Periplasmic-facing. Residues 61–81 (FIGSIALFGMMFGALIFGTIA) traverse the membrane as a helical segment. At 82 to 93 (DKLEHLGVSRKK) the chain is on the cytoplasmic side. The helical transmembrane segment at 94–114 (VIAVCIILFSLCTVLCGFSET) threads the bilayer. Residues 115–119 (TTQFS) lie on the Periplasmic side of the membrane. Residues 120 to 140 (IFRFLAGVGIGGVMPNVIALV) traverse the membrane as a helical segment. The Cytoplasmic segment spans residues 141–150 (SEYAPKKFKS). Residues 151–171 (FFVTLMFSGYAIGGMTAAFLG) form a helical membrane-spanning segment. Residues 172–181 (SILVPLYGWK) lie on the Periplasmic side of the membrane. The chain crosses the membrane as a helical span at residues 182–202 (IMFMIAGIPLVLLLPLMKVLP). The Cytoplasmic segment spans residues 203–258 (ESIDYLVRKKKDETVRFIMTKMVPSYQYQPDHVFVLNSSNQNQAQAPVKMIFQEQR). A helical transmembrane segment spans residues 259–279 (AFSTMMFWCSIFMTLIMVYAL). Residues 280–297 (GNWLPKLMIEAGYNLSKS) lie on the Periplasmic side of the membrane. A helical transmembrane segment spans residues 298 to 318 (LIFLFSLNVGGMIGSILGGYL). The Cytoplasmic segment spans residues 319–325 (ADRYNVK). Residues 326–346 (FVTMGLLLLGAISLSLLSFQF) form a helical membrane-spanning segment. Over 347-348 (SS) the chain is Periplasmic. A helical membrane pass occupies residues 349-369 (VILYILIACAGAASIGAQIML). The Cytoplasmic portion of the chain corresponds to 370–387 (LAYMAKFYAPNVRSTGIG). Residues 388 to 408 (WGLGMGRVGAILGPILTGWLL) form a helical membrane-spanning segment. Over 409-414 (SLQLPH) the chain is Periplasmic. A helical transmembrane segment spans residues 415-435 (FYNFLALSIPAVLGIVTVFLI). Residues 436 to 466 (NDRRMYQPEPISPIANQNDTTTVKVNEAVSH) are Cytoplasmic-facing.

Belongs to the major facilitator superfamily. Aromatic acid:H(+) symporter (AAHS) (TC 2.A.1.15) family.

It is found in the cell inner membrane. Functionally, probable uptake of benzoate. The protein is Benzoate transport protein (benK) of Acinetobacter baylyi (strain ATCC 33305 / BD413 / ADP1).